Reading from the N-terminus, the 479-residue chain is UDP-glycosyltransferase 85A8 (479 aa).

UDP-alpha-D-glucose is bound by residues Ser-302, 358–359 (WC), 376–384 (HSGWNSTIE), and 398–401 (FAEQ).

This sequence belongs to the UDP-glycosyltransferase family.

Functionally, may glycosylate diterpenes or flavonols in leaves. This is UDP-glycosyltransferase 85A8 from Stevia rebaudiana (Stevia).